We begin with the raw amino-acid sequence, 395 residues long: Protein-arginine rhamnosyltransferase (395 aa).

DTDP-beta-L-rhamnose-binding positions include 19-22, tyrosine 205, glutamine 272, and 288-292; these read NYGD and RGEDS. The active-site Proton acceptor is aspartate 22. Residue glutamate 290 is part of the active site.

Belongs to the glycosyltransferase 104 family.

It carries out the reaction dTDP-beta-L-rhamnose + L-arginyl-[protein] = N(omega)-(alpha-L-rhamnosyl)-L-arginyl-[protein] + dTDP + H(+). In terms of biological role, protein-arginine rhamnosyltransferase that catalyzes the transfer of a single rhamnose to elongation factor P (EF-P) on 'Lys-32', a modification required for EF-P-dependent rescue of polyproline stalled ribosomes. This chain is Protein-arginine rhamnosyltransferase, found in Shewanella oneidensis (strain ATCC 700550 / JCM 31522 / CIP 106686 / LMG 19005 / NCIMB 14063 / MR-1).